We begin with the raw amino-acid sequence, 114 residues long: MKLVRFLMKLNNETVSIELKNGTVVHGTITGVDVSMNTHLKTVKMSLKGKNPVTLDHLSLRGNNIRYYILPDSLNLETLLVEDTPRVKPKKPVAGKAVGRGRGRGRGRGRGRGR.

Positions Lys-2–Leu-74 constitute a Sm domain. The tract at residues Val-87 to Arg-114 is disordered. 8 consecutive repeat copies span residues Gly-99 to Arg-100, Gly-101 to Arg-102, Gly-103 to Arg-104, Gly-105 to Arg-106, Gly-107 to Arg-108, Gly-109 to Arg-110, Gly-111 to Arg-112, and Gly-113 to Arg-114. The interval Gly-99–Arg-114 is 8 X 2 AA tandem repeats of G-R.

Belongs to the snRNP core protein family.

The protein localises to the nucleus. Its subcellular location is the nucleus speckle. It is found in the nucleolus. Its function is as follows. Involved in splicing regulation. Facilitates post-transcriptional gene silencing (PTGS) by limiting the degradation of transgene aberrant RNAs by the RNA quality control (RQC) machinery, thus favoring their entry into cytoplasmic siRNA bodies where they can trigger PTGS. Does not participate in the production of small RNAs. The chain is Small nuclear ribonucleoprotein SmD1a from Arabidopsis thaliana (Mouse-ear cress).